Here is a 55-residue protein sequence, read N- to C-terminus: UPF0391 membrane protein NE1120 (55 aa).

A run of 2 helical transmembrane segments spans residues 4-24 (MALVFFLIAVLAGILGFAGIA) and 27-47 (LAWAAKVLFFAGLILTVVFYL).

This sequence belongs to the UPF0391 family.

It is found in the cell membrane. The chain is UPF0391 membrane protein NE1120 from Nitrosomonas europaea (strain ATCC 19718 / CIP 103999 / KCTC 2705 / NBRC 14298).